We begin with the raw amino-acid sequence, 997 residues long: RNA2 polyprotein (997 aa).

The interval 370 to 376 (KVVSVKG) is involved in tubule formation by the movement protein.

Interacts with the large capsid protein. As to quaternary structure, interacts with the small capsid protein. Homomultimer; assembles as pentons. Interacts with the movement protein (via C-terminus). In terms of assembly, interacts (via C-terminus) with the large capsid protein. Specific enzymatic cleavages by picornain 3C-like protease in vivo yield mature proteins.

It is found in the host cell junction. The protein resides in the host plasmodesma. Its subcellular location is the virion. Functionally, responsible for viral RNA2 accumulation. May function by recruiting the RNA1-encoded polyprotein that contains the replication protein to RNA2 and enable its replication. In terms of biological role, transports the viral genome to neighboring plant cells directly through plasmosdesmata, without any budding. The movement protein allows efficient cell to cell propagation, by bypassing the host cell wall barrier. Acts by forming a tubular structure at the host plasmodesmata, enlarging it enough to allow free passage of virion capsids. Binds to GTP and to single-stranded RNA and single-stranded DNA in a non-sequence-specific manner. Its function is as follows. Together with the small capsid protein, forms an icosahedral capsid (T=3) enclosing the viral positive strand RNA genome, with a diameter of approximately 300 Angstroms. The capsid is formed from 60 copies each of the large and the small capsid protein. The large capsid protein interacts with the viral RNA. Together with the large capsid protein, forms an icosahedral capsid (T=3) enclosing the viral positive strand RNA genome, with a diameter of approximately 300 Angstroms. The capsid is formed from 60 copies each of the large and the small capsid protein. The small capsid protein forms the turrets at the fivefold axes of the viral particle. Also seems to act as suppressor of post-transcriptional gene silencing (PTGS), a mechanism of plant viral defense that limits the accumulation of viral RNAs. The protein is RNA2 polyprotein of Andean potato mottle virus (APMV).